Reading from the N-terminus, the 223-residue chain is Small heat shock protein hspI, mitochondrial (223 aa).

Residues 1 to 23 constitute a mitochondrion transit peptide; that stretch reads MYKLSKTTPFFFRRAFLCGRRGG. The sHSP domain occupies 109-223; the sequence is KTRGFRSPKT…YVKSTTINVQ (115 aa).

Belongs to the small heat shock protein (HSP20) family.

The protein localises to the mitochondrion. The chain is Small heat shock protein hspI, mitochondrial (hspI) from Dictyostelium discoideum (Social amoeba).